We begin with the raw amino-acid sequence, 42 residues long: Mating-type M-specific polypeptide Mi (42 aa).

Its subcellular location is the cytoplasm. It is found in the nucleus. Mating type proteins are sequence specific DNA-binding proteins that act as master switches in yeast differentiation by controlling gene expression in a cell type-specific fashion. Required for meiosis, but plays no role in conjugation. In Schizosaccharomyces pombe (strain 972 / ATCC 24843) (Fission yeast), this protein is Mating-type M-specific polypeptide Mi (mat1-Mi).